The sequence spans 635 residues: MISQAYPLLSSIHSPADLKKLSLHELELVAAECRKKVIELVSQNGGHFGSSLGVVELTVALHYVYQSPTDRIIWDVGHQAYVHKILTGRLAQMETNRRYHGLAGFPKRSESPHDAFGTGHASTSISAAAGLAAARDLAGRKEKVVAIIGDGSLTGGMAFEAMNHLGDTKSDVLVILNDNQMAISPSTGGLKNYLVNLTLNKTYNRLRKFVWDSLSLLHNEIGETAKTAVHRIEDGIKAAFTPGAYFEALGFRYFGPIDGHNMEQLIKALREMRQLHHPKLLHVITTKGKGFKPAEENQPKWHASVGGFDIETGKNVKAPGKPAKPKYQEVFGEALVELALKDPTITAITAAMPSGTSLDLFQQAIPSRCFDVGIAEQHAVTFAAGLACGGFKPVFAVYSTFLQRAYDQLIHDVALQNLHVVFAIDRAGLVGEDGPTHHGAFDLSYLNVVPNLTIMAPGDEQELRNMLYTALYDIKGPVAIRYPRGSGSGATLHKEFTPVPVGRGRILRDGKSVALLGIGTMSNRALETAALLEAAGLDPLVCDMRFLKPLDTEIIDMAASRCTHIVTIEENSIIGGFGSNVVNYLHHAHPGIKCISFGLPDAFVTHGSMDELYREVGLDAESLSGKILEFYKDKP.

Thiamine diphosphate is bound by residues histidine 78 and 119 to 121 (GHA). Aspartate 150 contributes to the Mg(2+) binding site. Thiamine diphosphate contacts are provided by residues 151–152 (GS), asparagine 179, phenylalanine 291, and glutamate 376. Asparagine 179 is a Mg(2+) binding site.

It belongs to the transketolase family. DXPS subfamily. Homodimer. It depends on Mg(2+) as a cofactor. Thiamine diphosphate is required as a cofactor.

The enzyme catalyses D-glyceraldehyde 3-phosphate + pyruvate + H(+) = 1-deoxy-D-xylulose 5-phosphate + CO2. Its pathway is metabolic intermediate biosynthesis; 1-deoxy-D-xylulose 5-phosphate biosynthesis; 1-deoxy-D-xylulose 5-phosphate from D-glyceraldehyde 3-phosphate and pyruvate: step 1/1. In terms of biological role, catalyzes the acyloin condensation reaction between C atoms 2 and 3 of pyruvate and glyceraldehyde 3-phosphate to yield 1-deoxy-D-xylulose-5-phosphate (DXP). The sequence is that of 1-deoxy-D-xylulose-5-phosphate synthase from Chlorobaculum tepidum (strain ATCC 49652 / DSM 12025 / NBRC 103806 / TLS) (Chlorobium tepidum).